Consider the following 400-residue polypeptide: Signal recognition particle receptor FtsY (400 aa).

Disordered stretches follow at residues 12–37 (TKKT…QEEQ) and 51–86 (NKIK…KDKK). Basic and acidic residues predominate over residues 51–72 (NKIKKTKTSETKKQEKPIETLK). GTP-binding positions include 192–199 (GVNGTGKT), 278–282 (DTAGR), and 342–345 (TKMD).

Belongs to the GTP-binding SRP family. FtsY subfamily. In terms of assembly, part of the signal recognition particle protein translocation system, which is composed of SRP and FtsY.

The protein resides in the cell membrane. It localises to the cytoplasm. It carries out the reaction GTP + H2O = GDP + phosphate + H(+). In terms of biological role, involved in targeting and insertion of nascent membrane proteins into the cytoplasmic membrane. Acts as a receptor for the complex formed by the signal recognition particle (SRP) and the ribosome-nascent chain (RNC). The protein is Signal recognition particle receptor FtsY of Mycoplasma mycoides subsp. mycoides SC (strain CCUG 32753 / NCTC 10114 / PG1).